The primary structure comprises 170 residues: Lipoprotein signal peptidase (170 aa).

5 helical membrane passes run 13-33 (IFIS…VTYV), 72-92 (LFFL…SLKE), 96-113 (VSRF…GNII), 116-136 (LFRP…IFGL), and 142-162 (FNFA…YDLF). Active-site residues include Asp-124 and Asp-146.

The protein belongs to the peptidase A8 family.

The protein resides in the cell inner membrane. It carries out the reaction Release of signal peptides from bacterial membrane prolipoproteins. Hydrolyzes -Xaa-Yaa-Zaa-|-(S,diacylglyceryl)Cys-, in which Xaa is hydrophobic (preferably Leu), and Yaa (Ala or Ser) and Zaa (Gly or Ala) have small, neutral side chains.. Its pathway is protein modification; lipoprotein biosynthesis (signal peptide cleavage). Functionally, this protein specifically catalyzes the removal of signal peptides from prolipoproteins. This chain is Lipoprotein signal peptidase, found in Borrelia duttonii (strain Ly).